The chain runs to 311 residues: Interleukin-20 receptor subunit beta (311 aa).

Positions 1–29 are cleaved as a signal peptide; it reads MQTFTMVLEEIWTSLFMWFFYALIPCLLT. Residues 30 to 233 lie on the Extracellular side of the membrane; the sequence is DEVAILPAPQ…VEVQGEAIPL (204 aa). Fibronectin type-III domains lie at 37 to 136 and 144 to 228; these read APQN…RNST and EITK…EVQG. A glycan (N-linked (GlcNAc...) asparagine) is linked at asparagine 40. An intrachain disulfide couples cysteine 89 to cysteine 97. N-linked (GlcNAc...) asparagine glycosylation occurs at asparagine 134. Cysteine 202 and cysteine 223 are joined by a disulfide. A helical membrane pass occupies residues 234-254; sequence VLALFAFVGFMLILVVVPLFV. The Cytoplasmic portion of the chain corresponds to 255-311; sequence WKMGRLLQYSCCPVVVLPDTLKITNSPQKLISCRREEVDACATAVMSPEELLRAWIS.

It belongs to the type II cytokine receptor family. As to quaternary structure, heterodimer with IL20RA and heterodimer with IL22RA1. Widely expressed with highest levels in skin and testis. Highly expressed in psoriatic skin.

It is found in the membrane. Its function is as follows. The IL20RA/IL20RB dimer is a receptor for IL19, IL20 and IL24. The IL22RA1/IL20RB dimer is a receptor for IL20 and IL24. The chain is Interleukin-20 receptor subunit beta (IL20RB) from Homo sapiens (Human).